The chain runs to 123 residues: Large ribosomal subunit protein uL29y (123 aa).

Belongs to the universal ribosomal protein uL29 family.

The chain is Large ribosomal subunit protein uL29y (RPL35B) from Arabidopsis thaliana (Mouse-ear cress).